A 712-amino-acid polypeptide reads, in one-letter code: Testis-specific gene 10 protein (712 aa).

Phosphoserine is present on S161. The interval 571–703 (QMTNERISMQ…SPDRDLDRSL (133 aa)) is interaction with HIF1A. The tract at residues 673-699 (YHLGSMKPNTKCHSPERAHHRSPDRDL) is disordered. The segment covering 685–699 (HSPERAHHRSPDRDL) has biased composition (basic and acidic residues). S702 is subject to Phosphoserine.

This sequence belongs to the CEP135/TSGA10 family. Interacts with HIF1A. In terms of processing, processed into N-terminal 27-kDa and C-terminal 55-kDa fragments. In terms of tissue distribution, expressed in testis, predominantly in elongated spermatids (at protein level). Detected in spermatocytes only at the mRNA, but not at the protein level.

It is found in the cytoplasm. The protein resides in the cytoskeleton. It localises to the microtubule organizing center. The protein localises to the centrosome. Its subcellular location is the centriole. Its function is as follows. Plays a role in spermatogenesis. When overexpressed, prevents nuclear localization of HIF1A. In Rattus norvegicus (Rat), this protein is Testis-specific gene 10 protein (Tsga10).